A 448-amino-acid polypeptide reads, in one-letter code: Glucose-6-phosphate isomerase (448 aa).

The Proton donor role is filled by E288. Active-site residues include H309 and K423.

It belongs to the GPI family.

It localises to the cytoplasm. The catalysed reaction is alpha-D-glucose 6-phosphate = beta-D-fructose 6-phosphate. It participates in carbohydrate biosynthesis; gluconeogenesis. Its pathway is carbohydrate degradation; glycolysis; D-glyceraldehyde 3-phosphate and glycerone phosphate from D-glucose: step 2/4. In terms of biological role, catalyzes the reversible isomerization of glucose-6-phosphate to fructose-6-phosphate. In Fusobacterium nucleatum subsp. nucleatum (strain ATCC 25586 / DSM 15643 / BCRC 10681 / CIP 101130 / JCM 8532 / KCTC 2640 / LMG 13131 / VPI 4355), this protein is Glucose-6-phosphate isomerase.